Consider the following 296-residue polypeptide: DNA repair protein complementing XP-A cells homolog (296 aa).

A compositionally biased stretch (polar residues) spans 1-10; sequence MSAEVSTNES. Positions 1–39 are disordered; it reads MSAEVSTNESAPPAEKKSKLTNAQKARIERNQAKAQKLR. Over residues 26 to 39 the composition is skewed to basic and acidic residues; that stretch reads ARIERNQAKAQKLR. Residues 26 to 47 carry the Nuclear localization signal motif; sequence ARIERNQAKAQKLREAKLVSHP. Residues cysteine 126, cysteine 129, cysteine 147, and cysteine 150 each coordinate Zn(2+). The segment at 126-150 is a zinc-finger region; the sequence is CLECGDMFADSYLFNNFGHSVCDKC.

It belongs to the XPA family. In terms of tissue distribution, strongly expressed in the central nervous system and muscles.

The protein resides in the nucleus. Functionally, involved in DNA excision repair. Initiates repair by binding to damaged sites with various affinities, depending on the photoproduct and the transcriptional state of the region. The protein is DNA repair protein complementing XP-A cells homolog (Xpac) of Drosophila melanogaster (Fruit fly).